The chain runs to 424 residues: MASGDGGDDAGVKRVADRYLKREVLGEGTYGVVFKAVDTKTGNTVAIKKIRLGKYKEGVNFTALREIKLLKELKDSNIIELIDAFPYKGNLHLVFEFMETDLEAVIRDRNIVLSPADTKSYIQMMLKGLAFCHKKWVLHRDMKPNNLLIGADGQLKLADFGLARIFGSPERNFTHQVFARWYRAPELLFGTKQYGSAVDIWAAGCIFAELLLRRPFLQGSSDIDQLGKIFAAFGTPKSSQWPDMVYLPDYVEYQFVSAPPLRSLFPMASDDALDLLSRMFTYDPKARITAQQALEHRYFLSVPAPTKPSQLPRPPPKGDSGNNKIPDLNLQDGPVVLSPPRKLRRVTAHEGMEVHMHRADRTEEHPSGARHMDDMSSQSSRIPMSVDVGAIFGTRPAPRPTLNSADKSRLKRKLDMDPEFGYTE.

In terms of domain architecture, Protein kinase spans 19-299 (YLKREVLGEG…AQQALEHRYF (281 aa)). ATP contacts are provided by residues 25–33 (LGEGTYGVV) and lysine 48. Threonine 29 is modified (phosphothreonine). Tyrosine 30 carries the post-translational modification Phosphotyrosine. Aspartate 141 functions as the Proton acceptor in the catalytic mechanism. A Phosphoserine modification is found at serine 168. Position 174 is a phosphothreonine (threonine 174). 2 disordered regions span residues 303–337 (PAPTKPSQLPRPPPKGDSGNNKIPDLNLQDGPVVL) and 359–424 (ADRT…GYTE). Residues 359–374 (ADRTEEHPSGARHMDD) show a composition bias toward basic and acidic residues.

It belongs to the protein kinase superfamily. CMGC Ser/Thr protein kinase family. CDC2/CDKX subfamily. In terms of assembly, interacts with CYCH1-1. Expressed in actively dividing cells of roots, leaves and shoots. Expressed in the intercalary meristem and the elongation zone of internodes.

Its subcellular location is the nucleus. The catalysed reaction is L-seryl-[protein] + ATP = O-phospho-L-seryl-[protein] + ADP + H(+). The enzyme catalyses L-threonyl-[protein] + ATP = O-phospho-L-threonyl-[protein] + ADP + H(+). It catalyses the reaction [DNA-directed RNA polymerase] + ATP = phospho-[DNA-directed RNA polymerase] + ADP + H(+). Functionally, CDK-activating kinase that may control G1/S phase progression. May control the rate of cell differentiation to accomplish proper development of organs, or in response to a changing environment. Forms a complex with cyclin CYCH1-1 that phosphorylates CDKA-1 and the C-terminal domain (CTD) of the large subunit of RNA polymerase II. The polypeptide is Cyclin-dependent kinase D-1 (CDKD-1) (Oryza sativa subsp. japonica (Rice)).